Here is a 323-residue protein sequence, read N- to C-terminus: uncharacterized protein (323 aa).

Positions M1–A45 are cleaved as a signal peptide. A disordered region spans residues F186–V227. 2 helical membrane passes run S269 to T289 and A290 to V310.

Its subcellular location is the cell membrane. This is an uncharacterized protein from Mycobacterium tuberculosis (strain CDC 1551 / Oshkosh).